Here is a 340-residue protein sequence, read N- to C-terminus: uncharacterized protein (340 aa).

An RING-CH-type zinc finger spans residues 6 to 70 (KYEKSSARCW…PQCLTAYRIA (65 aa)). Zn(2+)-binding residues include Cys-14, Cys-17, Cys-37, Cys-39, His-44, Cys-47, Cys-60, and Cys-63. Helical transmembrane passes span 249–269 (EFWI…TKIL), 274–294 (PILL…GNFT), and 300–320 (IIGA…FIAW).

Its subcellular location is the membrane. This is an uncharacterized protein from Schizosaccharomyces pombe (strain 972 / ATCC 24843) (Fission yeast).